The primary structure comprises 405 residues: Deoxyguanosinetriphosphate triphosphohydrolase-like protein (405 aa).

The HD domain occupies 75–219 (RLTHTIEVAQ…AAIADDIAYN (145 aa)).

Belongs to the dGTPase family. Type 2 subfamily.

In Rhizobium meliloti (strain 1021) (Ensifer meliloti), this protein is Deoxyguanosinetriphosphate triphosphohydrolase-like protein.